We begin with the raw amino-acid sequence, 185 residues long: Threonylcarbamoyl-AMP synthase (185 aa).

The YrdC-like domain maps to 4-185 (SFRAQCAARV…LVTGQVIRPA (182 aa)).

It belongs to the SUA5 family. TsaC subfamily.

It localises to the cytoplasm. It carries out the reaction L-threonine + hydrogencarbonate + ATP = L-threonylcarbamoyladenylate + diphosphate + H2O. Its function is as follows. Required for the formation of a threonylcarbamoyl group on adenosine at position 37 (t(6)A37) in tRNAs that read codons beginning with adenine. Catalyzes the conversion of L-threonine, HCO(3)(-)/CO(2) and ATP to give threonylcarbamoyl-AMP (TC-AMP) as the acyladenylate intermediate, with the release of diphosphate. The sequence is that of Threonylcarbamoyl-AMP synthase from Pseudomonas aeruginosa (strain UCBPP-PA14).